A 679-amino-acid polypeptide reads, in one-letter code: Methyl-accepting chemotaxis protein McpB (679 aa).

3 divergent domain HAMP regions span residues 8–56 (AVAQ…RQLR), 63–112 (QQVE…AAHI), and 111–156 (HIAV…ERLR). In terms of domain architecture, PAS spans 171 to 213 (YNARIKSALDNVSANVMIADNDLNIIYMNRTVSEMLGRAEADI). His234 contributes to the heme binding site. The DxT. Important for signal propagation motif lies at 285–287 (DRT). A divergent domain HAMP 4 region spans residues 289-332 (EHRAEQEVSQLVQAAAAGDFSKRVEEAGKEGFFLRLAKDLNSLV). One can recognise an HAMP 5 domain in the interval 333-385 (DTADRGLRDVSRMLGALAQGDLTQRIEADYQGTFGQLKDFSNDTAQSLSRMLG). One can recognise a Methyl-accepting transducer domain in the interval 390–619 (AADTINTAAS…EAAAAAEAMQ (230 aa)). Disordered stretches follow at residues 405–425 (NAEL…TASS) and 644–679 (ASAR…WEEF). A compositionally biased stretch (polar residues) spans 411–425 (RTEQQASSLEETASS). Residues 670–679 (ARKEDGWEEF) show a composition bias toward basic and acidic residues. The GWEEF pentapeptide. Important for methylation by CheR2 motif lies at 675-679 (GWEEF).

Belongs to the methyl-accepting chemotaxis (MCP) protein family. In terms of assembly, homodimer. The PAS domains form dimers in the presence and absence of oxygen. Interacts with the methyltransferase CheR2 via the C-terminal McpB pentapeptide GWEEF. Interacts with the methylesterase/gutaminase CheB2, which also binds to the GWEEF pentapeptide. In terms of processing, methylated by CheR2, but not by CheR1, CheR3 or WspC. Demethylated by CheB2. In vitro, can be methylated by E.coli CheR.

Its subcellular location is the cytoplasm. Chemoreceptor that plays a critical role in the virulence and pathogenesis of P.aeruginosa in a variety of hosts. Probably acts through oxygen sensing. Uses a heme-based sensor. Could be involved in chemotaxis. When expressed in E.coli, is able to sense and mediate repellent responses to oxygen, carbon monoxide and nitric oxide. The polypeptide is Methyl-accepting chemotaxis protein McpB (Pseudomonas aeruginosa (strain ATCC 15692 / DSM 22644 / CIP 104116 / JCM 14847 / LMG 12228 / 1C / PRS 101 / PAO1)).